The primary structure comprises 244 residues: 5'-nucleotidase SurE 2 (244 aa).

Aspartate 8, aspartate 9, serine 39, and asparagine 96 together coordinate a divalent metal cation.

Belongs to the SurE nucleotidase family. The cofactor is a divalent metal cation.

Its subcellular location is the cytoplasm. The enzyme catalyses a ribonucleoside 5'-phosphate + H2O = a ribonucleoside + phosphate. In terms of biological role, nucleotidase that shows phosphatase activity on nucleoside 5'-monophosphates. This chain is 5'-nucleotidase SurE 2, found in Thermus thermophilus (strain ATCC BAA-163 / DSM 7039 / HB27).